A 318-amino-acid polypeptide reads, in one-letter code: Ribosomal protein L11 methyltransferase (318 aa).

4 residues coordinate S-adenosyl-L-methionine: Thr-161, Gly-182, Asp-204, and Asn-247.

Belongs to the methyltransferase superfamily. PrmA family.

Its subcellular location is the cytoplasm. It catalyses the reaction L-lysyl-[protein] + 3 S-adenosyl-L-methionine = N(6),N(6),N(6)-trimethyl-L-lysyl-[protein] + 3 S-adenosyl-L-homocysteine + 3 H(+). Its function is as follows. Methylates ribosomal protein L11. The chain is Ribosomal protein L11 methyltransferase from Moorella thermoacetica (strain ATCC 39073 / JCM 9320).